A 643-amino-acid polypeptide reads, in one-letter code: Phosphomethylpyrimidine synthase (643 aa).

Substrate contacts are provided by residues Asn-248, Met-277, Tyr-306, His-342, 362–364, 403–406, and Glu-442; these read SRG and DGLR. His-446 lines the Zn(2+) pocket. Residue Tyr-469 coordinates substrate. His-510 provides a ligand contact to Zn(2+). Residues Cys-590, Cys-593, and Cys-598 each coordinate [4Fe-4S] cluster.

The protein belongs to the ThiC family. As to quaternary structure, homodimer. [4Fe-4S] cluster serves as cofactor.

The catalysed reaction is 5-amino-1-(5-phospho-beta-D-ribosyl)imidazole + S-adenosyl-L-methionine = 4-amino-2-methyl-5-(phosphooxymethyl)pyrimidine + CO + 5'-deoxyadenosine + formate + L-methionine + 3 H(+). The protein operates within cofactor biosynthesis; thiamine diphosphate biosynthesis. Its function is as follows. Catalyzes the synthesis of the hydroxymethylpyrimidine phosphate (HMP-P) moiety of thiamine from aminoimidazole ribotide (AIR) in a radical S-adenosyl-L-methionine (SAM)-dependent reaction. The sequence is that of Phosphomethylpyrimidine synthase from Paraburkholderia phytofirmans (strain DSM 17436 / LMG 22146 / PsJN) (Burkholderia phytofirmans).